The primary structure comprises 2383 residues: Highly reducing polyketide synthase SAT13 (2383 aa).

Positions 6 to 433 (PVPLAIVGIA…GTNAHAVLER (428 aa)) constitute a Ketosynthase family 3 (KS3) domain. Active-site for beta-ketoacyl synthase activity residues include Cys180, His315, and His355. The segment at 536–828 (FIFTGQGAQW…IGPHSALAGP (293 aa)) is malonyl-CoA:ACP transacylase (MAT) domain. Residue Ser626 is the For malonyltransferase activity of the active site. The N-terminal hotdog fold stretch occupies residues 922–1062 (HDLLGLRMTE…GNIVVVFKTS (141 aa)). The dehydratase (DH) domain stretch occupies residues 922 to 1239 (HDLLGLRMTE…GMELRSFVAR (318 aa)). Residues 922 to 1242 (HDLLGLRMTE…LRSFVARDSN (321 aa)) form the PKS/mFAS DH domain. The Proton acceptor; for dehydratase activity role is filled by His954. Residues 1087 to 1242 (GKLTHAGQLY…LRSFVARDSN (156 aa)) form a C-terminal hotdog fold region. Asp1152 functions as the Proton donor; for dehydratase activity in the catalytic mechanism. Positions 1669-1977 (DGQNRLVFVE…KQGSMKKCVL (309 aa)) are enoylreductase (ER) domain. A catalytic ketoreductase (KRc) domain region spans residues 2001 to 2184 (ATYVVAGGLG…MSLNIGGIKD (184 aa)). One can recognise a Carrier domain in the interval 2287–2364 (EISEFVARSI…DLAQKVVSRS (78 aa)). Ser2324 is subject to O-(pantetheine 4'-phosphoryl)serine.

Its pathway is mycotoxin biosynthesis. In terms of biological role, highly reducing polyketide synthase; part of the satratoxin SC2 cluster involved in the biosynthesis of satratoxins, trichothecene mycotoxins that are associated with human food poisonings. Satratoxins are suggested to be made by products of multiple gene clusters (SC1, SC2 and SC3) that encode 21 proteins in all, including polyketide synthases, acetyltransferases, and other enzymes expected to modify the trichothecene skeleton. SC1 encodes 10 proteins, SAT1 to SAT10. The largest are SAT8, which encodes a putative polyketide synthase (PKS) with a conventional non-reducing architecture, and SAT10, a putative protein containing four ankyrin repeats and thus may be involved in protein scaffolding. The putative short-chain reductase SAT3 may assist the PKS in some capacity. SAT6 contains a secretory lipase domain and acts probably as a trichothecene esterase. SAT5 encodes a putative acetyltransferase, and so, with SAT6, may affect endogenous protection from toxicity. The probable transcription factor SAT9 may regulate the expression of the SC1 cluster. SC2 encodes proteins SAT11 to SAT16, the largest of which encodes the putative reducing PKS SAT13. SAT11 is a cytochrome P450 monooxygenase, while SAT14 and SAT16 are probable acetyltransferases. The SC2 cluster may be regulated by the transcription factor SAT15. SC3 is a small cluster that encodes 5 proteins, SAT17 to SAT21. SAT21 is a putative MFS-type transporter which may have a role in exporting secondary metabolites. The four other proteins putatively encoded in SC3 include the taurine hydroxylase-like protein SAT17, the O-methyltransferase SAT18, the acetyltransferase SAT19, and the Cys6-type zinc finger SAT20, the latter being probably involved in regulation of SC3 expression. This chain is Highly reducing polyketide synthase SAT13, found in Stachybotrys chartarum (strain CBS 109288 / IBT 7711) (Toxic black mold).